The sequence spans 442 residues: Putative FNIP repeat-containing protein L170 (442 aa).

3 FNIP repeats span residues 213 to 252, 253 to 294, and 295 to 348; these read FNSS…IGRG, FNSE…LGCF, and FNQS…FGMY.

This Acanthamoeba polyphaga mimivirus (APMV) protein is Putative FNIP repeat-containing protein L170.